We begin with the raw amino-acid sequence, 572 residues long: Linalool synthase TPS2, chloroplastic (572 aa).

The transit peptide at 1–27 (EVEEPKTKISASTAEASSSRISSAKMT) directs the protein to the chloroplast. Positions 1–45 (EVEEPKTKISASTAEASSSRISSAKMTADGTIKLGDQSPLKQSEK) are disordered. Over residues 8 to 28 (KISASTAEASSSRISSAKMTA) the composition is skewed to low complexity. (2E)-geranyl diphosphate is bound by residues Arg-284, Asp-321, Asp-325, Arg-462, and Asn-465. Residues Asp-321 and Asp-325 each contribute to the Mg(2+) site. The short motif at 321–325 (DDVYD) is the DDXXD motif element. Mg(2+) is bound by residues Asn-465, Thr-469, and Ser-473.

The protein belongs to the terpene synthase family. Tpsb subfamily. Monomer. Requires Mg(2+) as cofactor. It depends on Mn(2+) as a cofactor. Expressed in flowers and fruits.

It is found in the plastid. The protein resides in the chloroplast. It catalyses the reaction (2E)-geranyl diphosphate = beta-myrcene + diphosphate. It carries out the reaction (2E)-geranyl diphosphate + H2O = linalool + diphosphate. The catalysed reaction is (2E)-geranyl diphosphate = (Z)-beta-ocimene + diphosphate. The enzyme catalyses (2E)-geranyl diphosphate = (E)-beta-ocimene + diphosphate. It participates in secondary metabolite biosynthesis; terpenoid biosynthesis. Its function is as follows. Monoterpene synthase (mono-TPS) involved in the biosynthesis of monoterpenes natural products, constituent of coffee beverage aroma. Catalyzes the conversion of (2E)-geranyl diphosphate (GPP) into linalool and beta-myrcene, and, as minor products, cis-ocimene and trans-ocimene. Not able to use geranylgeranyl pyrophosphate (GGPP) and farnesyl pyrophosphate (FPP) as substrates. The sequence is that of Linalool synthase TPS2, chloroplastic from Coffea arabica (Arabian coffee).